We begin with the raw amino-acid sequence, 461 residues long: Cysteine--tRNA ligase (461 aa).

Cysteine 30 lines the Zn(2+) pocket. The short motif at 32–42 (VTIYDLCHIGH) is the 'HIGH' region element. 3 residues coordinate Zn(2+): cysteine 211, histidine 236, and glutamate 240. The 'KMSKS' region signature appears at 268-272 (KMSKS). ATP is bound at residue lysine 271.

The protein belongs to the class-I aminoacyl-tRNA synthetase family. Monomer. Requires Zn(2+) as cofactor.

The protein localises to the cytoplasm. It catalyses the reaction tRNA(Cys) + L-cysteine + ATP = L-cysteinyl-tRNA(Cys) + AMP + diphosphate. The chain is Cysteine--tRNA ligase from Shewanella sp. (strain W3-18-1).